The following is a 118-amino-acid chain: MRSAKLKFEKRKSRIRHKISRTSNRVRLSVFKSGRHIYAQIIDDSKSITIASASTLDKTIKKIKKSHCNVENAIKIGREIAKKANSAGIKEVVFDRGGYKYHGIIKALADAAREKITF.

The protein belongs to the universal ribosomal protein uL18 family. Part of the 50S ribosomal subunit; part of the 5S rRNA/L5/L18/L25 subcomplex. Contacts the 5S and 23S rRNAs.

Its function is as follows. This is one of the proteins that bind and probably mediate the attachment of the 5S RNA into the large ribosomal subunit, where it forms part of the central protuberance. This chain is Large ribosomal subunit protein uL18, found in Rickettsia typhi (strain ATCC VR-144 / Wilmington).